Consider the following 184-residue polypeptide: dITP/XTP pyrophosphatase (184 aa).

A substrate-binding site is contributed by 8-13 (TGNKGK). Residues E37 and D66 each coordinate Mg(2+). The active-site Proton acceptor is the D66. Substrate-binding positions include S67, 142–145 (FGYD), K163, and 168–169 (HR).

The protein belongs to the HAM1 NTPase family. Homodimer. It depends on Mg(2+) as a cofactor.

It catalyses the reaction XTP + H2O = XMP + diphosphate + H(+). The enzyme catalyses dITP + H2O = dIMP + diphosphate + H(+). The catalysed reaction is ITP + H2O = IMP + diphosphate + H(+). Functionally, pyrophosphatase that catalyzes the hydrolysis of nucleoside triphosphates to their monophosphate derivatives, with a high preference for the non-canonical purine nucleotides XTP (xanthosine triphosphate), dITP (deoxyinosine triphosphate) and ITP. Seems to function as a house-cleaning enzyme that removes non-canonical purine nucleotides from the nucleotide pool, thus preventing their incorporation into DNA/RNA and avoiding chromosomal lesions. The protein is dITP/XTP pyrophosphatase of Methanosarcina acetivorans (strain ATCC 35395 / DSM 2834 / JCM 12185 / C2A).